A 77-amino-acid chain; its full sequence is Large ribosomal subunit protein uL29 (77 aa).

This sequence belongs to the universal ribosomal protein uL29 family.

The sequence is that of Large ribosomal subunit protein uL29 from Methanopyrus kandleri (strain AV19 / DSM 6324 / JCM 9639 / NBRC 100938).